The following is a 341-amino-acid chain: Mitochondrial transcription factor 1 (341 aa).

Residues Leu23, Glu77, Asp101, and Asn137 each coordinate S-adenosyl-L-methionine.

Belongs to the class I-like SAM-binding methyltransferase superfamily. rRNA adenine N(6)-methyltransferase family.

The protein resides in the mitochondrion. In terms of biological role, mitochondrial transcription factor that confers selective promoter recognition on the core subunit of the yeast mitochondrial RNA polymerase. Interacts with DNA in a non-specific manner. This Saccharomyces paradoxus (Yeast) protein is Mitochondrial transcription factor 1 (MTF1).